The following is a 322-amino-acid chain: Delta-aminolevulinic acid dehydratase (322 aa).

Cysteine 120, cysteine 122, and cysteine 130 together coordinate Zn(2+). Residue lysine 195 is the Schiff-base intermediate with substrate of the active site. 5-aminolevulinate-binding residues include arginine 205 and arginine 217. Glutamate 233 lines the Mg(2+) pocket. Lysine 248 serves as the catalytic Schiff-base intermediate with substrate. Residues serine 274 and tyrosine 312 each contribute to the 5-aminolevulinate site.

Belongs to the ALAD family. Homooctamer. Zn(2+) serves as cofactor.

The enzyme catalyses 2 5-aminolevulinate = porphobilinogen + 2 H2O + H(+). The protein operates within porphyrin-containing compound metabolism; protoporphyrin-IX biosynthesis; coproporphyrinogen-III from 5-aminolevulinate: step 1/4. Functionally, catalyzes an early step in the biosynthesis of tetrapyrroles. Binds two molecules of 5-aminolevulinate per subunit, each at a distinct site, and catalyzes their condensation to form porphobilinogen. This Archaeoglobus fulgidus (strain ATCC 49558 / DSM 4304 / JCM 9628 / NBRC 100126 / VC-16) protein is Delta-aminolevulinic acid dehydratase (hemB).